Consider the following 371-residue polypeptide: MERYSTPLIGPSFAALTNGSVTDKVTPDMAHLVHPYWNQFPAMEPKWAKFLAAYMVLIATISWCGNGVVIYIFSTTKSLRTPANLLVINLAISDFGIMITNTPMMGINLFYETWVLGPLMCDIYGGLGSAFGCSSILSMCMISLDRYNVIVKGMAGQPMTIKLAIMKIALIWFMASIWTLAPVFGWSRYVPEGNLTSCGIDYLERDWNPRSYLIFYSIFVYYLPLFLICYSYWFIIAAVSAHEKAMREQAKKMNVKSLRSSEDADKSAEGKLAKVALVTISLWFMAWTPYTIINTLGLFKYEGLTPLNTIWGACFAKSAACYNPIVYGISHPKYGIALKEKCPCCVFGKVDDGKASDATSQATNNESETKA.

Over 1-47 (MERYSTPLIGPSFAALTNGSVTDKVTPDMAHLVHPYWNQFPAMEPKW) the chain is Extracellular. N-linked (GlcNAc...) asparagine glycosylation occurs at N18. Residues 48-72 (AKFLAAYMVLIATISWCGNGVVIYI) form a helical membrane-spanning segment. Over 73 to 84 (FSTTKSLRTPAN) the chain is Cytoplasmic. A helical membrane pass occupies residues 85-110 (LLVINLAISDFGIMITNTPMMGINLF). Topologically, residues 111-124 (YETWVLGPLMCDIY) are extracellular. A disulfide bridge connects residues C121 and C198. A helical transmembrane segment spans residues 125-144 (GGLGSAFGCSSILSMCMISL). The Cytoplasmic portion of the chain corresponds to 145–163 (DRYNVIVKGMAGQPMTIKL). A helical membrane pass occupies residues 164–187 (AIMKIALIWFMASIWTLAPVFGWS). Residues 188–211 (RYVPEGNLTSCGIDYLERDWNPRS) are Extracellular-facing. Residues 212–239 (YLIFYSIFVYYLPLFLICYSYWFIIAAV) traverse the membrane as a helical segment. Over 240–274 (SAHEKAMREQAKKMNVKSLRSSEDADKSAEGKLAK) the chain is Cytoplasmic. A helical transmembrane segment spans residues 275–298 (VALVTISLWFMAWTPYTIINTLGL). Topologically, residues 299–305 (FKYEGLT) are extracellular. A helical membrane pass occupies residues 306–330 (PLNTIWGACFAKSAACYNPIVYGIS). The residue at position 317 (K317) is an N6-(retinylidene)lysine. Residues 331–371 (HPKYGIALKEKCPCCVFGKVDDGKASDATSQATNNESETKA) lie on the Cytoplasmic side of the membrane.

The protein belongs to the G-protein coupled receptor 1 family. Opsin subfamily. Phosphorylated on some or all of the serine and threonine residues present in the C-terminal region.

It is found in the cell projection. Its subcellular location is the rhabdomere membrane. In terms of biological role, visual pigments are the light-absorbing molecules that mediate vision. They consist of an apoprotein, opsin, covalently linked to cis-retinal. The sequence is that of Opsin Rh1 (NINAE) from Calliphora vicina (Blue blowfly).